The following is a 427-amino-acid chain: MSGSRKQEAIDELRNSLDVPADTAQSVLESFNWDVQEAIESLTGESSRVDRNSKLGLSFGVFQSVFSLLFSGLHKLWMILSRVPLISTFIPIFGTTKRVLSPADTANKLVQNLEEQYGTEHIDFFTDGGYMEALTRIKRNYGVALLFFTSSKNDDSETFSRSVLMNQELKEFLNRRNILCWTGDVCEDEAFRGSRQFHCTKFPSAVLVMYSPQLSELVVAAQLHGCLDSSSIITNLTNALAKHLPSLERFRSEREAREAARELRRQQDNAYQASLARDRERQAFARAEEERLAKEKEEREIVQKKKKQYRAWLASNLPPEPSSEDEPARLSIRFPDGSRAVRRFKKDDTVESVYNYVDYMLFEKEEPEEFGRATSSSNPVTPPSDYKHDFHFQLYSSLPRALLKPSVAISTNKAIFPNGTVVVELDD.

Residues L247–A311 are a coiled coil. One can recognise a UBX domain in the interval S323 to L425.

The protein localises to the endoplasmic reticulum. In terms of biological role, involved in protein degradation through the ubiquitin/proteasome pathway. The protein is UBX domain-containing protein 10 (ucp10) of Schizosaccharomyces pombe (strain 972 / ATCC 24843) (Fission yeast).